The chain runs to 275 residues: 3-methyl-2-oxobutanoate hydroxymethyltransferase (275 aa).

Mg(2+) is bound by residues aspartate 51 and aspartate 90. 3-methyl-2-oxobutanoate-binding positions include 51-52, aspartate 90, and lysine 120; that span reads DS. Position 122 (glutamate 122) interacts with Mg(2+). Glutamate 189 functions as the Proton acceptor in the catalytic mechanism.

This sequence belongs to the PanB family. In terms of assembly, homodecamer; pentamer of dimers. It depends on Mg(2+) as a cofactor.

It is found in the cytoplasm. The enzyme catalyses 3-methyl-2-oxobutanoate + (6R)-5,10-methylene-5,6,7,8-tetrahydrofolate + H2O = 2-dehydropantoate + (6S)-5,6,7,8-tetrahydrofolate. It participates in cofactor biosynthesis; (R)-pantothenate biosynthesis; (R)-pantoate from 3-methyl-2-oxobutanoate: step 1/2. In terms of biological role, catalyzes the reversible reaction in which hydroxymethyl group from 5,10-methylenetetrahydrofolate is transferred onto alpha-ketoisovalerate to form ketopantoate. The sequence is that of 3-methyl-2-oxobutanoate hydroxymethyltransferase from Phenylobacterium zucineum (strain HLK1).